The following is a 340-amino-acid chain: Ferrochelatase (340 aa).

2 residues coordinate Fe cation: His189 and Glu292.

Belongs to the ferrochelatase family.

The protein localises to the cytoplasm. The catalysed reaction is heme b + 2 H(+) = protoporphyrin IX + Fe(2+). The protein operates within porphyrin-containing compound metabolism; protoheme biosynthesis; protoheme from protoporphyrin-IX: step 1/1. Functionally, catalyzes the ferrous insertion into protoporphyrin IX. This Pseudomonas aeruginosa (strain LESB58) protein is Ferrochelatase.